A 352-amino-acid polypeptide reads, in one-letter code: Cyclin-O (352 aa).

The tract at residues 1–40 is disordered; that stretch reads MVTPCPASPGSPAAGAGRRDSHQNLRAPVKKSRRPCLRRK. Residues 28 to 40 show a composition bias toward basic residues; it reads PVKKSRRPCLRRK. Ser83 bears the Phosphoserine mark.

This sequence belongs to the cyclin family. In terms of tissue distribution, present in respiratory cells (at protein level). Expressed in multiciliated tissue in brain and fallopian tube (at protein level). Highly expressed in oocytes.

It localises to the cytoplasm. It is found in the nucleus. The protein resides in the nucleolus. Its function is as follows. Specifically required for generation of multiciliated cells, possibly by promoting a cell cycle state compatible with centriole amplification and maturation. Acts downstream of MCIDAS to promote mother centriole amplification and maturation in preparation for apical docking. May be involved in apoptosis in lymphoid cells; however, this result requires additional evidences in vivo. May be involved in oocyte meiotic resumption in oocytes. In Mus musculus (Mouse), this protein is Cyclin-O.